The sequence spans 365 residues: Protein dbl-1 (365 aa).

The N-terminal stretch at 1–42 (MNDSVRTTTTISSTKSLVHSFQLSAILHLFLLISFTPMSAAA) is a signal peptide. The propeptide occupies 43 to 244 (DQHASHATRR…KRSAQTGNSE (202 aa)). N110, N143, and N167 each carry an N-linked (GlcNAc...) asparagine glycan. Residues 231–259 (SVRRKRSAQTGNSERKNRKKGRKHHNTEA) are disordered. Basic residues predominate over residues 246–255 (KNRKKGRKHH). 3 disulfides stabilise this stretch: C264–C330, C293–C362, and C297–C364. N306 carries N-linked (GlcNAc...) asparagine glycosylation.

It belongs to the TGF-beta family. In terms of assembly, homodimer; disulfide-linked. Interacts with drag-1. Expressed in embryos just prior to hatching and remains constant in most cells throughout the larval and adult stages. Expressed by AVA command interneurons.

It localises to the secreted. In terms of biological role, ligand for the serine/threonine-protein kinase receptor type-1 sma-6 which activates a TGF-beta-like signaling pathway. Multifunctional protein that is involved in body size, male ectodermal patterning, innate immunity, lipid metabolism and neural plasticity. Dose-dependent regulator of body size, probably influencing the sizes of some or all cells rather than their number. Plays a role in patterning of male-specific genital sensilla (simple sense organs), known as rays, and mating-associated structures, spicules. Plays a protective role in response to infection by the Gram-negative bacterium S.marcescens, by activating expression of genes involved in innate immunity. Regulator of lipid homeostasis, acting non cell-autonomously in the hypodermis; partly dependent on the Insulin/IGF-1-like signaling (IIS) mediated pathway. Required for aversive olfactory learning of pathogenic bacteria in adults. Involved in gland cell morphology, possibly via activation of a Smad-independent TGF-beta signaling pathway. Required to oppose the autoregulation of expression of Runt-related transcription factor rnt-1. In Caenorhabditis elegans, this protein is Protein dbl-1.